The chain runs to 103 residues: UPF0145 protein BC_5181 (103 aa).

It belongs to the UPF0145 family.

In Bacillus cereus (strain ATCC 14579 / DSM 31 / CCUG 7414 / JCM 2152 / NBRC 15305 / NCIMB 9373 / NCTC 2599 / NRRL B-3711), this protein is UPF0145 protein BC_5181.